The chain runs to 163 residues: Nucleotide-binding protein BC_1159 (163 aa).

Belongs to the YajQ family.

Nucleotide-binding protein. The polypeptide is Nucleotide-binding protein BC_1159 (Bacillus cereus (strain ATCC 14579 / DSM 31 / CCUG 7414 / JCM 2152 / NBRC 15305 / NCIMB 9373 / NCTC 2599 / NRRL B-3711)).